Here is a 395-residue protein sequence, read N- to C-terminus: Succinyl-diaminopimelate desuccinylase (395 aa).

Residue histidine 74 coordinates Zn(2+). Aspartate 76 is a catalytic residue. Aspartate 107 lines the Zn(2+) pocket. Glutamate 141 (proton acceptor) is an active-site residue. Residues glutamate 142, glutamate 170, and histidine 368 each coordinate Zn(2+).

The protein belongs to the peptidase M20A family. DapE subfamily. In terms of assembly, homodimer. Requires Zn(2+) as cofactor. Co(2+) is required as a cofactor.

It catalyses the reaction N-succinyl-(2S,6S)-2,6-diaminopimelate + H2O = (2S,6S)-2,6-diaminopimelate + succinate. The protein operates within amino-acid biosynthesis; L-lysine biosynthesis via DAP pathway; LL-2,6-diaminopimelate from (S)-tetrahydrodipicolinate (succinylase route): step 3/3. Functionally, catalyzes the hydrolysis of N-succinyl-L,L-diaminopimelic acid (SDAP), forming succinate and LL-2,6-diaminopimelate (DAP), an intermediate involved in the bacterial biosynthesis of lysine and meso-diaminopimelic acid, an essential component of bacterial cell walls. The polypeptide is Succinyl-diaminopimelate desuccinylase (Brucella melitensis biotype 1 (strain ATCC 23456 / CCUG 17765 / NCTC 10094 / 16M)).